Consider the following 171-residue polypeptide: Xanthine-guanine phosphoribosyltransferase (171 aa).

5-phospho-alpha-D-ribose 1-diphosphate contacts are provided by residues 51–52 and 106–114; these read RG and DDLVDSGKT. Mg(2+) is bound at residue D107. The guanine site is built by D110 and I153. Xanthine contacts are provided by D110 and I153. GMP-binding positions include 110–114 and 152–153; these read DSGKT and WI.

The protein belongs to the purine/pyrimidine phosphoribosyltransferase family. XGPT subfamily. As to quaternary structure, homotetramer. It depends on Mg(2+) as a cofactor.

Its subcellular location is the cell inner membrane. It catalyses the reaction GMP + diphosphate = guanine + 5-phospho-alpha-D-ribose 1-diphosphate. It carries out the reaction XMP + diphosphate = xanthine + 5-phospho-alpha-D-ribose 1-diphosphate. The catalysed reaction is IMP + diphosphate = hypoxanthine + 5-phospho-alpha-D-ribose 1-diphosphate. Its pathway is purine metabolism; GMP biosynthesis via salvage pathway; GMP from guanine: step 1/1. The protein operates within purine metabolism; XMP biosynthesis via salvage pathway; XMP from xanthine: step 1/1. Functionally, purine salvage pathway enzyme that catalyzes the transfer of the ribosyl-5-phosphate group from 5-phospho-alpha-D-ribose 1-diphosphate (PRPP) to the N9 position of the 6-oxopurines guanine and xanthine to form the corresponding ribonucleotides GMP (guanosine 5'-monophosphate) and XMP (xanthosine 5'-monophosphate), with the release of PPi. To a lesser extent, also acts on hypoxanthine. The chain is Xanthine-guanine phosphoribosyltransferase from Ruegeria pomeroyi (strain ATCC 700808 / DSM 15171 / DSS-3) (Silicibacter pomeroyi).